Here is a 261-residue protein sequence, read N- to C-terminus: Cytochrome c oxidase subunit 3 (261 aa).

Over 1-15 the chain is Mitochondrial matrix; the sequence is MAHQAHAYHMVDPSP. Residues 16 to 34 form a helical membrane-spanning segment; it reads WPLTGAIGALFLTSGLAIW. At 35-40 the chain is on the mitochondrial intermembrane side; it reads FHFQSV. Residues 41-66 form a helical membrane-spanning segment; it reads TLLTLGLILLLLTMYQWWRDIIREGT. Residues 67–72 are Mitochondrial matrix-facing; it reads FQGHHT. The chain crosses the membrane as a helical span at residues 73-105; the sequence is PPVQKGLRYGMILFITSEVFFFLGFFWAFYHSS. Residues 106–128 lie on the Mitochondrial intermembrane side of the membrane; the sequence is LAPTPELGGCWPPTGITPLDPFE. Residues 129-152 traverse the membrane as a helical segment; it reads VPLLNTAVLLASGVTVTWAHHSLM. Over 153-155 the chain is Mitochondrial matrix; the sequence is EGA. A helical membrane pass occupies residues 156–183; that stretch reads RKQAIQALALTIILGVYFTALQAMEYYE. Residues 184 to 190 lie on the Mitochondrial intermembrane side of the membrane; that stretch reads APFTIAD. The helical transmembrane segment at 191–223 threads the bilayer; the sequence is GVYGSTFFVATGFHGLHVIIGSSFLAVCLLRQI. The Mitochondrial matrix segment spans residues 224–232; it reads QYHFTSEHH. The chain crosses the membrane as a helical span at residues 233–256; that stretch reads FGFEAAAWYWHFVDVVWLFLYVSI. Residues 257–261 are Mitochondrial intermembrane-facing; it reads YWWGS.

The protein belongs to the cytochrome c oxidase subunit 3 family. As to quaternary structure, component of the cytochrome c oxidase (complex IV, CIV), a multisubunit enzyme composed of 14 subunits. The complex is composed of a catalytic core of 3 subunits MT-CO1, MT-CO2 and MT-CO3, encoded in the mitochondrial DNA, and 11 supernumerary subunits COX4I, COX5A, COX5B, COX6A, COX6B, COX6C, COX7A, COX7B, COX7C, COX8 and NDUFA4, which are encoded in the nuclear genome. The complex exists as a monomer or a dimer and forms supercomplexes (SCs) in the inner mitochondrial membrane with NADH-ubiquinone oxidoreductase (complex I, CI) and ubiquinol-cytochrome c oxidoreductase (cytochrome b-c1 complex, complex III, CIII), resulting in different assemblies (supercomplex SCI(1)III(2)IV(1) and megacomplex MCI(2)III(2)IV(2)).

The protein resides in the mitochondrion inner membrane. It catalyses the reaction 4 Fe(II)-[cytochrome c] + O2 + 8 H(+)(in) = 4 Fe(III)-[cytochrome c] + 2 H2O + 4 H(+)(out). Functionally, component of the cytochrome c oxidase, the last enzyme in the mitochondrial electron transport chain which drives oxidative phosphorylation. The respiratory chain contains 3 multisubunit complexes succinate dehydrogenase (complex II, CII), ubiquinol-cytochrome c oxidoreductase (cytochrome b-c1 complex, complex III, CIII) and cytochrome c oxidase (complex IV, CIV), that cooperate to transfer electrons derived from NADH and succinate to molecular oxygen, creating an electrochemical gradient over the inner membrane that drives transmembrane transport and the ATP synthase. Cytochrome c oxidase is the component of the respiratory chain that catalyzes the reduction of oxygen to water. Electrons originating from reduced cytochrome c in the intermembrane space (IMS) are transferred via the dinuclear copper A center (CU(A)) of subunit 2 and heme A of subunit 1 to the active site in subunit 1, a binuclear center (BNC) formed by heme A3 and copper B (CU(B)). The BNC reduces molecular oxygen to 2 water molecules using 4 electrons from cytochrome c in the IMS and 4 protons from the mitochondrial matrix. The protein is Cytochrome c oxidase subunit 3 (mt-co3) of Formosania lacustris (Oriental stream loach).